The chain runs to 196 residues: FMN-dependent NADH:quinone oxidoreductase (196 aa).

FMN contacts are provided by residues serine 10 and 17–19; that span reads SYS.

It belongs to the azoreductase type 1 family. Homodimer. The cofactor is FMN.

The catalysed reaction is 2 a quinone + NADH + H(+) = 2 a 1,4-benzosemiquinone + NAD(+). It carries out the reaction N,N-dimethyl-1,4-phenylenediamine + anthranilate + 2 NAD(+) = 2-(4-dimethylaminophenyl)diazenylbenzoate + 2 NADH + 2 H(+). Its function is as follows. Quinone reductase that provides resistance to thiol-specific stress caused by electrophilic quinones. In terms of biological role, also exhibits azoreductase activity. Catalyzes the reductive cleavage of the azo bond in aromatic azo compounds to the corresponding amines. In Metamycoplasma arthritidis (strain 158L3-1) (Mycoplasma arthritidis), this protein is FMN-dependent NADH:quinone oxidoreductase.